Here is a 300-residue protein sequence, read N- to C-terminus: MVRVAVAGGTGGVGYAIVDALKAQTEHEFIVLSRTESPEYAAKNNVKVVSIDYSDVSQISKILDEHHIHTVISALCIVSKEHSDSQLNLVRGAAGSQSVKRFVPSEYGSAYEEKHALARPSTGLKAVAVKELAKTHLEYTSFVNGLFLDYLCMPTVPSHLAAGIRFFDIPSRTSVGIGSGTVPLVMTHTRDVGRFVVASLSLPKWENRSFIVGDRQSWHDVINIAGKITGEKWPSLRPSKSSGSHEPAHRAAYSASLKEHGDWFESGTFSSTLSSGSVYLNELFPEIIPSYGRRWPQDFD.

It belongs to the NmrA-type oxidoreductase family. Isoflavone reductase subfamily.

It participates in polyketide biosynthesis. Oxidoreductase; part of the gene cluster A that mediates the biosynthesis of botcinic acid and its botcinin derivatives, acetate-derived polyketides that contribute to virulence when combined with the sesquiterpene botrydial. Botcinic acid and its derivatives have been shown to induce chlorosis and necrosis during host plant infection, but also have antifungal activities. Two polyketide synthases, BOA6 and BOA9, are involved in the biosynthesis of botcinins. BOA6 mediates the formation of the per-methylated tetraketide core by condensation of four units of malonyl-CoA with one unit of acetyl-CoA, which would be methylated in activated methylene groups to yield a bicyclic acid intermediate that could then either be converted to botrylactone derivatives or lose the starter acetate unit through a retro-Claisen type C-C bond cleavage to yield botcinin derivatives. The second polyketide synthase, BOA9, is probably required for the biosynthesis of the tetraketide side chain of botcinins. The methyltransferase (MT) domain within BOA6 is probably responsible for the incorporation of four methyl groups. The trans-enoyl reductase BOA5 might take over the enoyl reductase function of BOA6 that misses an ER domain. The monooxygenases BOA2, BOA3 and BOA4 might be involved in further hydroxylations at C4, C5 and C8, whereas BOA7, close to BOA9, could potentially be involved in the hydroxylation at C4 in the side chain of botcinins. The polypeptide is Oxidoreductase BOA1 (Botryotinia fuckeliana (strain B05.10) (Noble rot fungus)).